A 545-amino-acid polypeptide reads, in one-letter code: T-complex protein 1 subunit gamma (545 aa).

N-acetylmethionine is present on Met-1. The tract at residues 1–24 (MMGHRPVLVLSQNTKRESGRKVQS) is disordered. Ser-11 carries the post-translational modification Phosphoserine. Residue Lys-15 forms a Glycyl lysine isopeptide (Lys-Gly) (interchain with G-Cter in SUMO2) linkage. Gly-42 is a binding site for ADP. Position 42 (Gly-42) interacts with ATP. Asp-93 provides a ligand contact to Mg(2+). Residues Gly-94, Thr-95, Thr-96, Ser-97, Thr-162, and Lys-163 each coordinate ADP. Positions 94, 95, and 96 each coordinate ATP. Ser-170 carries the phosphoserine modification. Lys-222 carries the post-translational modification N6-acetyllysine. Phosphoserine occurs at positions 243 and 244. Phosphotyrosine is present on Tyr-247. Residues Lys-248 and Lys-249 each participate in a glycyl lysine isopeptide (Lys-Gly) (interchain with G-Cter in SUMO2) cross-link. Ser-252 carries the post-translational modification Phosphoserine. Cys-366 and Cys-372 are disulfide-bonded. A Glycyl lysine isopeptide (Lys-Gly) (interchain with G-Cter in SUMO2) cross-link involves residue Lys-381. Residue Gly-411 coordinates ADP. Gly-411 is an ATP binding site. Phosphothreonine is present on residues Thr-430 and Thr-459. ADP contacts are provided by Gly-482, Glu-483, Glu-497, and Lys-502. Gly-482 serves as a coordination point for ATP. Glu-497 serves as a coordination point for ATP. Residues 526–545 (HKKKGDDQSRQGGAPDAGQE) are disordered.

This sequence belongs to the TCP-1 chaperonin family. In terms of assembly, component of the chaperonin-containing T-complex (TRiC), a hexadecamer composed of two identical back-to-back stacked rings enclosing a protein folding chamber. Each ring is made up of eight different subunits: TCP1/CCT1, CCT2, CCT3, CCT4, CCT5, CCT6A/CCT6, CCT7, CCT8. Interacts with PACRG. Interacts with DNAAF4. Interacts with DLEC1.

It localises to the cytoplasm. The catalysed reaction is ATP + H2O = ADP + phosphate + H(+). Functionally, component of the chaperonin-containing T-complex (TRiC), a molecular chaperone complex that assists the folding of actin, tubulin and other proteins upon ATP hydrolysis. The TRiC complex mediates the folding of WRAP53/TCAB1, thereby regulating telomere maintenance. As part of the TRiC complex may play a role in the assembly of BBSome, a complex involved in ciliogenesis regulating transports vesicles to the cilia. This is T-complex protein 1 subunit gamma (CCT3) from Pongo abelii (Sumatran orangutan).